The primary structure comprises 766 residues: Polyribonucleotide nucleotidyltransferase (766 aa).

Positions 490 and 496 each coordinate Mg(2+). Positions 557–616 (PKIDTITIPVDKIKVVIGKGGEQIDKIIAETGVKIDIDDEGLCSIFSSDQSAIDRAKEII) constitute a KH domain. Positions 626 to 694 (GEVYEAKVVR…DKGRVDASMR (69 aa)) constitute an S1 motif domain. 2 stretches are compositionally biased toward basic and acidic residues: residues 700-734 (PEGYVEPERKPRERRDNKDRRNGNGFDRRNNDRNN) and 744-766 (FELRERKSHVDHEFPELSTKKPE). Residues 700-766 (PEGYVEPERK…FPELSTKKPE (67 aa)) are disordered.

This sequence belongs to the polyribonucleotide nucleotidyltransferase family. It depends on Mg(2+) as a cofactor.

It localises to the cytoplasm. It carries out the reaction RNA(n+1) + phosphate = RNA(n) + a ribonucleoside 5'-diphosphate. Its function is as follows. Involved in mRNA degradation. Catalyzes the phosphorolysis of single-stranded polyribonucleotides processively in the 3'- to 5'-direction. This chain is Polyribonucleotide nucleotidyltransferase, found in Lactococcus lactis subsp. cremoris (strain MG1363).